Here is a 198-residue protein sequence, read N- to C-terminus: Ribonuclease HII (198 aa).

One can recognise an RNase H type-2 domain in the interval 6–195 (RRVAGVDEVG…VHHMLYQDKN (190 aa)). Asp12, Glu13, and Asp103 together coordinate a divalent metal cation.

This sequence belongs to the RNase HII family. Requires Mn(2+) as cofactor. It depends on Mg(2+) as a cofactor.

The protein resides in the cytoplasm. The catalysed reaction is Endonucleolytic cleavage to 5'-phosphomonoester.. Functionally, endonuclease that specifically degrades the RNA of RNA-DNA hybrids. The protein is Ribonuclease HII of Roseobacter denitrificans (strain ATCC 33942 / OCh 114) (Erythrobacter sp. (strain OCh 114)).